A 38-amino-acid chain; its full sequence is Large ribosomal subunit protein bL36 (38 aa).

This sequence belongs to the bacterial ribosomal protein bL36 family.

This chain is Large ribosomal subunit protein bL36, found in Phytoplasma mali (strain AT).